The following is a 581-amino-acid chain: Putative ABC transporter ATP-binding protein MM_1996 (581 aa).

The region spanning 10-250 (IEIRDLWYTY…LEVFHRLGLR (241 aa)) is the ABC transporter 1 domain. ATP is bound at residue 44 to 51 (GPTGCGKS). The disordered stretch occupies residues 287 to 309 (GDYPASPGRKEKTSSPGWSSENN). The span at 300-309 (SSPGWSSENN) shows a compositional bias: polar residues. One can recognise an ABC transporter 2 domain in the interval 313 to 541 (VSVRDLWSGY…IDILRKASLT (229 aa)). Residue 346 to 353 (GTNGSGKS) participates in ATP binding.

It belongs to the ABC transporter superfamily.

The protein localises to the cell membrane. Probably part of an ABC transporter complex. Responsible for energy coupling to the transport system. The sequence is that of Putative ABC transporter ATP-binding protein MM_1996 from Methanosarcina mazei (strain ATCC BAA-159 / DSM 3647 / Goe1 / Go1 / JCM 11833 / OCM 88) (Methanosarcina frisia).